Here is a 360-residue protein sequence, read N- to C-terminus: Photosystem II protein D1 1 (360 aa).

The next 3 helical transmembrane spans lie at 29–46 (YVGW…SATI), 118–133 (HFLI…EWEL), and 142–156 (WICI…AAAA). His-118 contributes to the chlorophyll a binding site. Tyr-126 contacts pheophytin a. Residues Asp-170 and Glu-189 each contribute to the [CaMn4O5] cluster site. The chain crosses the membrane as a helical span at residues 197 to 218 (FHMLGVAGVFGGSLFSAMHGSL). A chlorophyll a-binding site is contributed by His-198. A quinone is bound by residues His-215 and 264–265 (SF). His-215 contacts Fe cation. His-272 contributes to the Fe cation binding site. Residues 274 to 288 (FLAAWPVIGIWFTAL) traverse the membrane as a helical segment. Residues His-332, Glu-333, Asp-342, and Ala-344 each coordinate [CaMn4O5] cluster. A propeptide spanning residues 345-360 (GTESAPVAVGNADLNG) is cleaved from the precursor.

It belongs to the reaction center PufL/M/PsbA/D family. PSII is composed of 1 copy each of membrane proteins PsbA, PsbB, PsbC, PsbD, PsbE, PsbF, PsbH, PsbI, PsbJ, PsbK, PsbL, PsbM, PsbT, PsbX, Psb30/Ycf12, peripheral proteins PsbO, CyanoQ (PsbQ), PsbU, PsbV and a large number of cofactors. It forms dimeric complexes. The cofactor is The D1/D2 heterodimer binds P680, chlorophylls that are the primary electron donor of PSII, and subsequent electron acceptors. It shares a non-heme iron and each subunit binds pheophytin, quinone, additional chlorophylls, carotenoids and lipids. D1 provides most of the ligands for the Mn4-Ca-O5 cluster of the oxygen-evolving complex (OEC). There is also a Cl(-1) ion associated with D1 and D2, which is required for oxygen evolution. The PSII complex binds additional chlorophylls, carotenoids and specific lipids.. In terms of processing, tyr-161 forms a radical intermediate that is referred to as redox-active TyrZ, YZ or Y-Z. C-terminally processed by CtpA; processing is essential to allow assembly of the oxygen-evolving complex and thus photosynthetic growth.

It is found in the cell inner membrane. It catalyses the reaction 2 a plastoquinone + 4 hnu + 2 H2O = 2 a plastoquinol + O2. Functionally, photosystem II (PSII) is a light-driven water:plastoquinone oxidoreductase that uses light energy to abstract electrons from H(2)O, generating O(2) and a proton gradient subsequently used for ATP formation. It consists of a core antenna complex that captures photons, and an electron transfer chain that converts photonic excitation into a charge separation. The D1/D2 (PsbA/PsbD) reaction center heterodimer binds P680, the primary electron donor of PSII as well as several subsequent electron acceptors. This chain is Photosystem II protein D1 1, found in Gloeobacter violaceus (strain ATCC 29082 / PCC 7421).